We begin with the raw amino-acid sequence, 253 residues long: ATP synthase subunit a (253 aa).

The next 6 membrane-spanning stretches (helical) occupy residues 27-47 (ISFT…IGFF), 87-107 (FFPF…IGMV), 117-137 (IIVT…VGLI), 146-166 (LFAP…IEII), 196-216 (FTVM…LAFA), and 224-244 (LEFL…CVYL).

Belongs to the ATPase A chain family. F-type ATPases have 2 components, CF(1) - the catalytic core - and CF(0) - the membrane proton channel. CF(1) has five subunits: alpha(3), beta(3), gamma(1), delta(1), epsilon(1). CF(0) has three main subunits: a(1), b(2) and c(9-12). The alpha and beta chains form an alternating ring which encloses part of the gamma chain. CF(1) is attached to CF(0) by a central stalk formed by the gamma and epsilon chains, while a peripheral stalk is formed by the delta and b chains.

It is found in the cell inner membrane. Functionally, key component of the proton channel; it plays a direct role in the translocation of protons across the membrane. The sequence is that of ATP synthase subunit a from Hyphomonas neptunium (strain ATCC 15444).